The chain runs to 81 residues: ATP synthase subunit c (81 aa).

2 consecutive transmembrane segments (helical) span residues 7–27 (AASVVAAGLAVGLGAIGPGLG) and 57–77 (FAFMESLTIYGLVVALVLLFA).

Belongs to the ATPase C chain family. F-type ATPases have 2 components, F(1) - the catalytic core - and F(0) - the membrane proton channel. F(1) has five subunits: alpha(3), beta(3), gamma(1), delta(1), epsilon(1). F(0) has four main subunits: a(1), b(1), b'(1) and c(10-14). The alpha and beta chains form an alternating ring which encloses part of the gamma chain. F(1) is attached to F(0) by a central stalk formed by the gamma and epsilon chains, while a peripheral stalk is formed by the delta, b and b' chains.

The protein localises to the cellular thylakoid membrane. F(1)F(0) ATP synthase produces ATP from ADP in the presence of a proton or sodium gradient. F-type ATPases consist of two structural domains, F(1) containing the extramembraneous catalytic core and F(0) containing the membrane proton channel, linked together by a central stalk and a peripheral stalk. During catalysis, ATP synthesis in the catalytic domain of F(1) is coupled via a rotary mechanism of the central stalk subunits to proton translocation. In terms of biological role, key component of the F(0) channel; it plays a direct role in translocation across the membrane. A homomeric c-ring of between 10-14 subunits forms the central stalk rotor element with the F(1) delta and epsilon subunits. The protein is ATP synthase subunit c of Prochlorococcus marinus (strain MIT 9301).